The primary structure comprises 176 residues: Probable chorismate pyruvate-lyase (176 aa).

The substrate site is built by R70, L108, and E166.

The protein belongs to the UbiC family.

It localises to the cytoplasm. The enzyme catalyses chorismate = 4-hydroxybenzoate + pyruvate. The protein operates within cofactor biosynthesis; ubiquinone biosynthesis. In terms of biological role, removes the pyruvyl group from chorismate, with concomitant aromatization of the ring, to provide 4-hydroxybenzoate (4HB) for the ubiquinone pathway. The chain is Probable chorismate pyruvate-lyase from Dechloromonas aromatica (strain RCB).